Consider the following 158-residue polypeptide: Ribosome maturation factor RimP (158 aa).

This sequence belongs to the RimP family.

Its subcellular location is the cytoplasm. Required for maturation of 30S ribosomal subunits. This chain is Ribosome maturation factor RimP, found in Pediococcus pentosaceus (strain ATCC 25745 / CCUG 21536 / LMG 10740 / 183-1w).